The following is a 177-amino-acid chain: Large ribosomal subunit protein uL6 (177 aa).

Belongs to the universal ribosomal protein uL6 family. As to quaternary structure, part of the 50S ribosomal subunit.

Functionally, this protein binds to the 23S rRNA, and is important in its secondary structure. It is located near the subunit interface in the base of the L7/L12 stalk, and near the tRNA binding site of the peptidyltransferase center. The chain is Large ribosomal subunit protein uL6 from Bordetella pertussis (strain Tohama I / ATCC BAA-589 / NCTC 13251).